Reading from the N-terminus, the 354-residue chain is mRNA cap guanine-N(7) methyltransferase 2 (354 aa).

Residues 8-286 enclose the mRNA cap 0 methyltransferase domain; that stretch reads KPEQSHHRLF…LYATFIFQKP (279 aa). S-adenosyl-L-methionine-binding positions include Lys-21, Asp-61, and 88-89; that span reads DP.

The protein belongs to the class I-like SAM-binding methyltransferase superfamily. mRNA cap 0 methyltransferase family.

The protein localises to the nucleus. It carries out the reaction a 5'-end (5'-triphosphoguanosine)-ribonucleoside in mRNA + S-adenosyl-L-methionine = a 5'-end (N(7)-methyl 5'-triphosphoguanosine)-ribonucleoside in mRNA + S-adenosyl-L-homocysteine. In terms of biological role, mRNA capping methyltransferase that methylates the N7 position of the added guanosine to the 5'-cap structure of mRNAs. Binds RNA containing 5'-terminal GpppC. This chain is mRNA cap guanine-N(7) methyltransferase 2, found in Arabidopsis thaliana (Mouse-ear cress).